Consider the following 548-residue polypeptide: Chaperonin GroEL 3 (548 aa).

ATP contacts are provided by residues 30 to 33 (TLGP), lysine 51, 87 to 91 (DGTTT), glycine 415, and aspartate 496.

The protein belongs to the chaperonin (HSP60) family. In terms of assembly, forms a cylinder of 14 subunits composed of two heptameric rings stacked back-to-back. Interacts with the co-chaperonin GroES.

It is found in the cytoplasm. The catalysed reaction is ATP + H2O + a folded polypeptide = ADP + phosphate + an unfolded polypeptide.. In terms of biological role, together with its co-chaperonin GroES, plays an essential role in assisting protein folding. The GroEL-GroES system forms a nano-cage that allows encapsulation of the non-native substrate proteins and provides a physical environment optimized to promote and accelerate protein folding. This is Chaperonin GroEL 3 from Nitrobacter winogradskyi (strain ATCC 25391 / DSM 10237 / CIP 104748 / NCIMB 11846 / Nb-255).